The primary structure comprises 292 residues: Probable alpha-L-glutamate ligase (292 aa).

In terms of domain architecture, ATP-grasp spans 104 to 287; the sequence is HQLLAAKGID…VATRIIEHVE (184 aa). Residues Lys-141, 178–179, Asp-187, and 211–213 each bind ATP; these read EF and RSN. 3 residues coordinate Mg(2+): Asp-248, Glu-260, and Asn-262. 3 residues coordinate Mn(2+): Asp-248, Glu-260, and Asn-262.

It belongs to the RimK family. It depends on Mg(2+) as a cofactor. Requires Mn(2+) as cofactor.

This is Probable alpha-L-glutamate ligase from Stenotrophomonas maltophilia (strain K279a).